A 228-amino-acid polypeptide reads, in one-letter code: Vesicle transport protein SEC20 (228 aa).

The Cytoplasmic segment spans residues 1–199; the sequence is MAAPQDVHVR…LITKYNRREL (199 aa). Residues 37–90 are a coiled coil; that stretch reads LSELTELNTKVKEKFQQLKQRIQELEQSAREQDKESEKQLLLQEVENHKKQMLS. The helical; Anchor for type IV membrane protein transmembrane segment at 200–220 threads the bilayer; the sequence is TDKLLIFLALALFLATVLYIV. Over 221–228 the chain is Lumenal; sequence KKRLFPFL.

Belongs to the SEC20 family. Component of a SNARE complex consisting of STX18, USE1L, BNIP1/SEC20L and SEC22B. Interacts directly with STX18, RINT1/TIP20L and NAPA. Interacts with ZW10 through RINT1. Interacts with BCL2. Interacts with RNF186. Interacts with RNF185. Interacts with SQSTM1; increased by 'Lys-63'-linked polyubiquitination of BNIP1. Post-translationally, polyubiquitinated. 'Lys-63'-linked polyubiquitination by RNF185 increases the interaction with the autophagy receptor SQSTM1. Undergoes 'Lys-29'- and 'Lys-63'-linked polyubiquitination by RNF186 that may regulate BNIP1 localization to the mitochondrion.

Its subcellular location is the endoplasmic reticulum membrane. It is found in the mitochondrion membrane. Functionally, as part of a SNARE complex may be involved in endoplasmic reticulum membranes fusion and be required for the maintenance of endoplasmic reticulum organization. Also plays a role in apoptosis. It is for instance required for endoplasmic reticulum stress-induced apoptosis. As a substrate of RNF185 interacting with SQSTM1, might also be involved in mitochondrial autophagy. This chain is Vesicle transport protein SEC20, found in Mus musculus (Mouse).